Reading from the N-terminus, the 276-residue chain is Diaminopimelate epimerase (276 aa).

Asn-13, Gln-46, and Asn-66 together coordinate substrate. Catalysis depends on Cys-75, which acts as the Proton donor. Residues 76 to 77, Asn-159, Asn-192, and 210 to 211 contribute to the substrate site; these read GN and ER. Cys-219 functions as the Proton acceptor in the catalytic mechanism. 220 to 221 provides a ligand contact to substrate; it reads GT.

This sequence belongs to the diaminopimelate epimerase family. Homodimer.

It is found in the cytoplasm. It catalyses the reaction (2S,6S)-2,6-diaminopimelate = meso-2,6-diaminopimelate. The protein operates within amino-acid biosynthesis; L-lysine biosynthesis via DAP pathway; DL-2,6-diaminopimelate from LL-2,6-diaminopimelate: step 1/1. Its function is as follows. Catalyzes the stereoinversion of LL-2,6-diaminopimelate (L,L-DAP) to meso-diaminopimelate (meso-DAP), a precursor of L-lysine and an essential component of the bacterial peptidoglycan. The protein is Diaminopimelate epimerase of Pseudoalteromonas translucida (strain TAC 125).